The sequence spans 577 residues: Pentatricopeptide repeat-containing protein At1g06143 (577 aa).

PPR repeat units follow at residues 59 to 89 (DCRLMNQFITACTSFKRLDLAVSTMTQMQEP), 90 to 124 (NVFVYNALFKGFVTCSHPIRSLELYVRMLRDSVSP), 125 to 155 (SSYTYSSLVKASSFASRFGESLQAHIWKFGF), 158 to 192 (HVKIQTTLIDFYSATGRIREARKVFDEMPERDDIA), 193 to 219 (WTTMVSAYRRVLDMDSANSLANQMSEK), 220 to 250 (NEATSNCLINGYMGLGNLEQAESLFNQMPVK), 251 to 285 (DIISWTTMIKGYSQNKRYREAIAVFYKMMEEGIIP), 286 to 320 (DEVTMSTVISACAHLGVLEIGKEVHMYTLQNGFVL), 321 to 351 (DVYIGSALVDMYSKCGSLERALLVFFNLPKK), 352 to 386 (NLFCWNSIIEGLAAHGFAQEALKMFAKMEMESVKP), 387 to 417 (NAVTFVSVFTACTHAGLVDEGRRIYRSMIDD), and 423 to 453 (NVEHYGGMVHLFSKAGLIYEALELIGNMEFE). Residues 458–534 (IWGALLDGCR…CPGTSSIRID (77 aa)) are type E motif. Residues 535–565 (KRDHLFAAADKSHSASDEVCLLLDEIYDQMG) form a type E(+) motif region.

The protein belongs to the PPR family. PCMP-E subfamily.

The polypeptide is Pentatricopeptide repeat-containing protein At1g06143 (EMB1444) (Arabidopsis thaliana (Mouse-ear cress)).